A 180-amino-acid chain; its full sequence is Large ribosomal subunit protein uL5 (180 aa).

Belongs to the universal ribosomal protein uL5 family. Part of the 50S ribosomal subunit; part of the 5S rRNA/L5/L18/L25 subcomplex. Contacts the 5S rRNA and the P site tRNA. Forms a bridge to the 30S subunit in the 70S ribosome.

In terms of biological role, this is one of the proteins that bind and probably mediate the attachment of the 5S RNA into the large ribosomal subunit, where it forms part of the central protuberance. In the 70S ribosome it contacts protein S13 of the 30S subunit (bridge B1b), connecting the 2 subunits; this bridge is implicated in subunit movement. Contacts the P site tRNA; the 5S rRNA and some of its associated proteins might help stabilize positioning of ribosome-bound tRNAs. The chain is Large ribosomal subunit protein uL5 from Lactobacillus helveticus (strain DPC 4571).